The following is a 656-amino-acid chain: L-type lectin-domain containing receptor kinase S.1 (656 aa).

The signal sequence occupies residues 1-29 (MSWQWRRRQWPSPLLLILIVLHLVSSSSA). Residues 30-273 (IDFLYNSFSS…ARRILAWSLS (244 aa)) form a legume-lectin like region. At 30-304 (IDFLYNSFSS…SSSLSTGAIA (275 aa)) the chain is on the extracellular side. N-linked (GlcNAc...) asparagine glycans are attached at residues N42, N63, N121, N139, N191, N219, N282, and N293. Residues 305 to 325 (GIVIGCVVFVALIGFGGYLIW) traverse the membrane as a helical segment. The Cytoplasmic segment spans residues 326 to 656 (KKLMREEEEE…AAADSTAAHA (331 aa)). In terms of domain architecture, Protein kinase spans 361-639 (FSNDRLLGSG…LLGSPQEDLL (279 aa)). ATP contacts are provided by residues 367 to 375 (LGSGGFGKV) and K389. D485 acts as the Proton acceptor in catalysis.

The protein in the C-terminal section; belongs to the protein kinase superfamily. Ser/Thr protein kinase family. In the N-terminal section; belongs to the leguminous lectin family.

Its subcellular location is the cell membrane. The catalysed reaction is L-seryl-[protein] + ATP = O-phospho-L-seryl-[protein] + ADP + H(+). It carries out the reaction L-threonyl-[protein] + ATP = O-phospho-L-threonyl-[protein] + ADP + H(+). Functionally, involved in resistance response to the pathogenic oomycetes Phytophthora infestans and Phytophthora capsici and to the pathogenic bacteria Pseudomonas syringae. The polypeptide is L-type lectin-domain containing receptor kinase S.1 (Arabidopsis thaliana (Mouse-ear cress)).